A 104-amino-acid chain; its full sequence is Gastrin (104 aa).

Residues 1–21 form the signal peptide; that stretch reads MPRLCVCMLVLVLALATFSEA. A propeptide spanning residues 22-58 is cleaved from the precursor; the sequence is SWKPRSQLQDASSGPRTNGALEQHQLEKLGPASHHRR. A disordered region spans residues 23 to 104; it reads WKPRSQLQDA…RSAEEEDQYN (82 aa). Residues 25–37 are compositionally biased toward polar residues; that stretch reads PRSQLQDASSGPR. Tyr-87 is subject to Sulfotyrosine. Phenylalanine amide is present on Phe-92. Ser-96 carries the post-translational modification Phosphoserine. A propeptide spanning residues 96–104 is cleaved from the precursor; that stretch reads SAEEEDQYN. A Sulfotyrosine modification is found at Tyr-103.

It belongs to the gastrin/cholecystokinin family. Post-translationally, sulfation on Tyr-87 enhances proteolytic processing, and blocks peptide degradation. Levels of sulfation differ between proteolytically-cleaved gastrins and between tissues.

The protein resides in the secreted. In terms of biological role, gastrin stimulates the stomach mucosa to produce and secrete hydrochloric acid and the pancreas to secrete its digestive enzymes. It also stimulates smooth muscle contraction and increases blood circulation and water secretion in the stomach and intestine. The sequence is that of Gastrin (Gast) from Rattus norvegicus (Rat).